The following is a 356-amino-acid chain: Arginine kinase (356 aa).

At Ala-2 the chain carries N-acetylalanine. The 83-residue stretch at 9 to 91 (KLEAGFKKLE…FDPIIEDYHV (83 aa)) folds into the Phosphagen kinase N-terminal domain. An L-arginine-binding site is contributed by 64-68 (GVGIY). Positions 119 to 356 (YVISTRVRCG…LELIKMEKEM (238 aa)) constitute a Phosphagen kinase C-terminal domain. ATP-binding positions include 122–126 (STRVR) and His-185. Glu-225 contacts L-arginine. Arg-229 lines the ATP pocket. Cys-271 contributes to the L-arginine binding site. Residues 280–284 (RASVH) and 309–314 (RGTRGE) contribute to the ATP site. Glu-314 contributes to the L-arginine binding site.

This sequence belongs to the ATP:guanido phosphotransferase family.

The enzyme catalyses L-arginine + ATP = N(omega)-phospho-L-arginine + ADP + H(+). The sequence is that of Arginine kinase from Penaeus monodon (Giant tiger prawn).